A 430-amino-acid polypeptide reads, in one-letter code: Functional amyloid transporter FapF (430 aa).

Residues methionine 1 to alanine 24 form the signal peptide. Topologically, residues alanine 25 to lysine 131 are periplasmic. A coiled-coil region spans residues aspartate 29–glutamine 64. A disordered region spans residues glutamate 62 to glutamine 114. Gly residues predominate over residues glycine 92–serine 101. The tract at residues alanine 113–glycine 125 is alpha helical plug. The chain crosses the membrane as a beta stranded span at residues phenylalanine 132–arginine 142. Residues tyrosine 143–aspartate 172 lie on the Extracellular side of the membrane. The beta stranded transmembrane segment at asparagine 173 to asparagine 183 threads the bilayer. The Periplasmic segment spans residues leucine 184–glutamine 189. A beta stranded transmembrane segment spans residues phenylalanine 190–tyrosine 198. Residues arginine 199 to aspartate 224 are Extracellular-facing. The tract at residues tyrosine 203–arginine 223 is disordered. The chain crosses the membrane as a beta stranded span at residues proline 225–phenylalanine 238. The Periplasmic segment spans residues leucine 239–proline 246. The chain crosses the membrane as a beta stranded span at residues aspartate 247–alanine 256. Topologically, residues proline 257–valine 288 are extracellular. A beta stranded membrane pass occupies residues tryptophan 289–valine 298. Over lysine 299 to alanine 304 the chain is Periplasmic. The beta stranded transmembrane segment at valine 305 to histidine 314 threads the bilayer. Residues asparagine 315–aspartate 339 are Extracellular-facing. A beta stranded transmembrane segment spans residues serine 340–alanine 348. At phenylalanine 349 to serine 356 the chain is on the periplasmic side. A beta stranded transmembrane segment spans residues methionine 357–isoleucine 365. Residues glutamine 366–alanine 386 are Extracellular-facing. A beta stranded membrane pass occupies residues asparagine 387–isoleucine 397. Topologically, residues alanine 398–threonine 404 are periplasmic. Residues isoleucine 405 to glycine 412 form a beta stranded membrane-spanning segment. Residues methionine 413 to aspartate 419 are Extracellular-facing. Residues phenylalanine 420–tyrosine 428 traverse the membrane as a beta stranded segment. Over tyrosine 429–phenylalanine 430 the chain is Periplasmic.

The protein belongs to the amyloid transporter (TC 9.B.153) family. In terms of assembly, homotrimer.

Its subcellular location is the cell outer membrane. Functionally, transports fibril components across the outer membrane. Upon overexpression of the endogenous six-gene locus (fapA-fapF) in situ cells form large clumps during liquid growth, make large amounts of biofilm and produce amyloid fibrils. Expression of the 6 gene operon in E.coli strain BL21(DE3) induces flocculation and biofilm formation with copious extracellular fibrils. In Pseudomonas fluorescens, this protein is Functional amyloid transporter FapF.